We begin with the raw amino-acid sequence, 342 residues long: Ribosomal RNA small subunit methyltransferase C (342 aa).

The protein belongs to the methyltransferase superfamily. RsmC family. In terms of assembly, monomer.

Its subcellular location is the cytoplasm. The enzyme catalyses guanosine(1207) in 16S rRNA + S-adenosyl-L-methionine = N(2)-methylguanosine(1207) in 16S rRNA + S-adenosyl-L-homocysteine + H(+). Functionally, specifically methylates the guanine in position 1207 of 16S rRNA in the 30S particle. The polypeptide is Ribosomal RNA small subunit methyltransferase C (Shewanella oneidensis (strain ATCC 700550 / JCM 31522 / CIP 106686 / LMG 19005 / NCIMB 14063 / MR-1)).